We begin with the raw amino-acid sequence, 523 residues long: GMP synthase [glutamine-hydrolyzing] (523 aa).

The Glutamine amidotransferase type-1 domain occupies 8-205; it reads KILILDFGSQ…VVGICGCECK (198 aa). Catalysis depends on cysteine 85, which acts as the Nucleophile. Residues histidine 179 and glutamate 181 contribute to the active site. One can recognise a GMPS ATP-PPase domain in the interval 206 to 398; the sequence is WTAENIIERR…LGLPAEMLNR (193 aa). 233–239 is a binding site for ATP; the sequence is SGGVDSS.

In terms of assembly, homodimer.

It catalyses the reaction XMP + L-glutamine + ATP + H2O = GMP + L-glutamate + AMP + diphosphate + 2 H(+). The protein operates within purine metabolism; GMP biosynthesis; GMP from XMP (L-Gln route): step 1/1. In terms of biological role, catalyzes the synthesis of GMP from XMP. The chain is GMP synthase [glutamine-hydrolyzing] from Actinobacillus pleuropneumoniae serotype 5b (strain L20).